Reading from the N-terminus, the 55-residue chain is Large ribosomal subunit protein bL33 (55 aa).

This sequence belongs to the bacterial ribosomal protein bL33 family.

The chain is Large ribosomal subunit protein bL33 from Kocuria rhizophila (strain ATCC 9341 / DSM 348 / NBRC 103217 / DC2201).